The following is a 447-amino-acid chain: Adenylosuccinate synthetase (447 aa).

Residues 12 to 18 (GDEGKGK) and 40 to 42 (GHT) contribute to the GTP site. Aspartate 13 functions as the Proton acceptor in the catalytic mechanism. Aspartate 13 and glycine 40 together coordinate Mg(2+). IMP contacts are provided by residues 13–16 (DEGK), 38–41 (NAGH), threonine 128, arginine 142, glutamine 223, threonine 238, and arginine 302. Residue histidine 41 is the Proton donor of the active site. 298-304 (TTTGRKR) provides a ligand contact to substrate. GTP contacts are provided by residues arginine 304, 330–332 (KLD), and 412–414 (SLG).

It belongs to the adenylosuccinate synthetase family. In terms of assembly, homodimer. Mg(2+) is required as a cofactor.

It is found in the cytoplasm. It catalyses the reaction IMP + L-aspartate + GTP = N(6)-(1,2-dicarboxyethyl)-AMP + GDP + phosphate + 2 H(+). Its pathway is purine metabolism; AMP biosynthesis via de novo pathway; AMP from IMP: step 1/2. Functionally, plays an important role in the de novo pathway of purine nucleotide biosynthesis. Catalyzes the first committed step in the biosynthesis of AMP from IMP. This chain is Adenylosuccinate synthetase, found in Nostoc punctiforme (strain ATCC 29133 / PCC 73102).